The primary structure comprises 167 residues: Ubiquitin-fold modifier-conjugating enzyme 1 (167 aa).

Residue Cys116 is the Glycyl thioester intermediate of the active site. Lys122 participates in a covalent cross-link: Glycyl lysine isopeptide (Lys-Gly) (interchain with G-Cter in UFM1).

Belongs to the ubiquitin-conjugating enzyme family. UFC1 subfamily. As to quaternary structure, interacts with UBA5 (via C-terminus). Interacts with UFL1. Interacts with UFM1. Interacts with KIRREL3. In terms of processing, ufmylated at Lys-122. Deufmylated by UFSP1.

In terms of biological role, E2-like enzyme which specifically catalyzes the second step in ufmylation. Accepts the ubiquitin-like modifier UFM1 from the E1 enzyme UBA5 and forms an intermediate with UFM1 via a thioester linkage. Ufmylation is involved in various processes, such as ribosome recycling, response to DNA damage, interferon response or reticulophagy (also called ER-phagy). This is Ubiquitin-fold modifier-conjugating enzyme 1 from Homo sapiens (Human).